We begin with the raw amino-acid sequence, 87 residues long: Small ribosomal subunit protein bS18 (87 aa).

It belongs to the bacterial ribosomal protein bS18 family. As to quaternary structure, part of the 30S ribosomal subunit. Forms a tight heterodimer with protein bS6.

Its function is as follows. Binds as a heterodimer with protein bS6 to the central domain of the 16S rRNA, where it helps stabilize the platform of the 30S subunit. This chain is Small ribosomal subunit protein bS18, found in Nitratidesulfovibrio vulgaris (strain DSM 19637 / Miyazaki F) (Desulfovibrio vulgaris).